The primary structure comprises 327 residues: Lipoyl synthase (327 aa).

Residues Cys-72, Cys-77, Cys-83, Cys-98, Cys-102, Cys-105, and Ser-313 each contribute to the [4Fe-4S] cluster site. A Radical SAM core domain is found at 83–302 (CWSHGTATIM…RRVGLEKGFL (220 aa)).

This sequence belongs to the radical SAM superfamily. Lipoyl synthase family. The cofactor is [4Fe-4S] cluster.

Its subcellular location is the cytoplasm. It carries out the reaction [[Fe-S] cluster scaffold protein carrying a second [4Fe-4S](2+) cluster] + N(6)-octanoyl-L-lysyl-[protein] + 2 oxidized [2Fe-2S]-[ferredoxin] + 2 S-adenosyl-L-methionine + 4 H(+) = [[Fe-S] cluster scaffold protein] + N(6)-[(R)-dihydrolipoyl]-L-lysyl-[protein] + 4 Fe(3+) + 2 hydrogen sulfide + 2 5'-deoxyadenosine + 2 L-methionine + 2 reduced [2Fe-2S]-[ferredoxin]. It participates in protein modification; protein lipoylation via endogenous pathway; protein N(6)-(lipoyl)lysine from octanoyl-[acyl-carrier-protein]: step 2/2. Its function is as follows. Catalyzes the radical-mediated insertion of two sulfur atoms into the C-6 and C-8 positions of the octanoyl moiety bound to the lipoyl domains of lipoate-dependent enzymes, thereby converting the octanoylated domains into lipoylated derivatives. The chain is Lipoyl synthase from Francisella philomiragia subsp. philomiragia (strain ATCC 25017 / CCUG 19701 / FSC 153 / O#319-036).